Here is a 330-residue protein sequence, read N- to C-terminus: Lipoyl synthase (330 aa).

[4Fe-4S] cluster-binding residues include Cys55, Cys60, Cys66, Cys81, Cys85, Cys88, and Ser292. The Radical SAM core domain maps to 67–281 (WEDREATFLI…AEEAREIGFV (215 aa)).

It belongs to the radical SAM superfamily. Lipoyl synthase family. [4Fe-4S] cluster is required as a cofactor.

The protein localises to the cytoplasm. It catalyses the reaction [[Fe-S] cluster scaffold protein carrying a second [4Fe-4S](2+) cluster] + N(6)-octanoyl-L-lysyl-[protein] + 2 oxidized [2Fe-2S]-[ferredoxin] + 2 S-adenosyl-L-methionine + 4 H(+) = [[Fe-S] cluster scaffold protein] + N(6)-[(R)-dihydrolipoyl]-L-lysyl-[protein] + 4 Fe(3+) + 2 hydrogen sulfide + 2 5'-deoxyadenosine + 2 L-methionine + 2 reduced [2Fe-2S]-[ferredoxin]. The protein operates within protein modification; protein lipoylation via endogenous pathway; protein N(6)-(lipoyl)lysine from octanoyl-[acyl-carrier-protein]: step 2/2. Catalyzes the radical-mediated insertion of two sulfur atoms into the C-6 and C-8 positions of the octanoyl moiety bound to the lipoyl domains of lipoate-dependent enzymes, thereby converting the octanoylated domains into lipoylated derivatives. The protein is Lipoyl synthase of Cutibacterium acnes (strain DSM 16379 / KPA171202) (Propionibacterium acnes).